A 506-amino-acid chain; its full sequence is Aerotaxis receptor (506 aa).

Topologically, residues 1 to 166 are cytoplasmic; that stretch reads MSSHPYVTQQ…PSLPLRWRAR (166 aa). A helical membrane pass occupies residues 167–186; that stretch reads GVMTLMFILLAAMLWFVAAP. The Periplasmic portion of the chain corresponds to 187-190; it reads VVTY. The chain crosses the membrane as a helical span at residues 191–209; the sequence is ILCALVVLLASACFEWQIV. The Cytoplasmic portion of the chain corresponds to 210–506; sequence RPIENVAHQA…RLEDAVTVLH (297 aa). The Methyl-accepting transducer domain maps to 263–492; that stretch reads QVSSVRNGSE…ESAQVSAMVK (230 aa).

The protein belongs to the methyl-accepting chemotaxis (MCP) protein family.

The protein localises to the cell inner membrane. Signal transducer for aerotaxis. The aerotactic response is the accumulation of cells around air bubbles. The nature of the sensory stimulus detected by this protein is the proton motive force or cellular redox state. It uses a FAD prosthetic group as a redox sensor to monitor oxygen levels. The protein is Aerotaxis receptor (aer) of Escherichia coli (strain K12).